The sequence spans 310 residues: Coproporphyrin III ferrochelatase (310 aa).

Tyr-13 is a Fe-coproporphyrin III binding site. Tyr-13 is an N-methylmesoporphyrin binding site. Residue Glu-20 coordinates Mg(2+). Arg-30 serves as a coordination point for Fe-coproporphyrin III. An N-methylmesoporphyrin-binding site is contributed by 31-33 (RGR). A Mg(2+)-binding site is contributed by Arg-46. Residues 46-47 (RY), Ser-54, and Tyr-125 each bind Fe-coproporphyrin III. Positions 183 and 188 each coordinate N-methylmesoporphyrin. His-183 provides a ligand contact to Fe(2+). Residue Glu-264 participates in Fe(2+) binding. The Mg(2+) site is built by Asp-268 and Glu-272.

Belongs to the ferrochelatase family. As to quaternary structure, monomer. Interacts with frataxin/Fra.

The protein localises to the cytoplasm. The catalysed reaction is Fe-coproporphyrin III + 2 H(+) = coproporphyrin III + Fe(2+). It participates in porphyrin-containing compound metabolism; protoheme biosynthesis. Its activity is regulated as follows. Stimulated by Mg(2+). Inhibited by Cd(2+). Inhibited by N-methylmesoporphyrin (N-MeMP) and 2,4-disulfonic acid deuteroporphyrin IX (dSDP). Functionally, involved in coproporphyrin-dependent heme b biosynthesis. Catalyzes the insertion of ferrous iron into coproporphyrin III to form Fe-coproporphyrin III. It can also insert iron into protoporphyrin IX. Has weaker activity with 2,4 disulfonate, deuteroporphyrin and 2,4 hydroxyethyl. In vitro, can also use Zn(2+) or Cu(2+). The sequence is that of Coproporphyrin III ferrochelatase from Bacillus subtilis (strain 168).